The sequence spans 241 residues: MFAQQPRSAPAPFYEKVKQAISEKIHSGVWRPHDRIPSEAELVAQFGFSRMTINRALRELTDEGLLVRLQGVGTFVAEPKGQSALFEVRSIAAEIVARHHQHRCEVLLLEETRADHIQATALSVPEGTRIFHSLMVHYENEVPVQIEDRCVNAAVVPDYLHQDYTATTPHDYLSLIAPLTEGEHIVEAVQATAEECALLHIHAHDPCLLIRRRTWSTTHIVSHARLLFPGSRYRLQGRFGS.

Residues 11–79 (APFYEKVKQA…QGVGTFVAEP (69 aa)) enclose the HTH gntR-type domain. Positions 39–58 (EAELVAQFGFSRMTINRALR) form a DNA-binding region, H-T-H motif.

The protein operates within amino-acid degradation; L-histidine degradation into L-glutamate [regulation]. In terms of biological role, repressor which binds to the hutP region in the histidine utilization (hut) operon. It blocks the expression of all the hut genes in the absence of inducer. The protein is Histidine utilization repressor (hutC) of Klebsiella aerogenes (Enterobacter aerogenes).